The sequence spans 169 residues: Translationally-controlled tumor protein homolog (169 aa).

In terms of domain architecture, TCTP spans 1–169 (MIIYKDIVSG…FKDGLEEEKF (169 aa)).

Belongs to the TCTP family.

The protein resides in the cytoplasm. Its function is as follows. Involved in calcium binding and microtubule stabilization. The sequence is that of Translationally-controlled tumor protein homolog from Branchiostoma belcheri (Amphioxus).